The primary structure comprises 150 residues: Macrodomain Ter protein (150 aa).

This sequence belongs to the MatP family. In terms of assembly, homodimer.

The protein resides in the cytoplasm. Required for spatial organization of the terminus region of the chromosome (Ter macrodomain) during the cell cycle. Prevents early segregation of duplicated Ter macrodomains during cell division. Binds specifically to matS, which is a 13 bp signature motif repeated within the Ter macrodomain. The sequence is that of Macrodomain Ter protein from Erwinia tasmaniensis (strain DSM 17950 / CFBP 7177 / CIP 109463 / NCPPB 4357 / Et1/99).